A 495-amino-acid polypeptide reads, in one-letter code: MLRLINKTINKNDLIKINNSKRFCSTTTNSTINKDNIYDIIIIGGGLVGSTMACSIGNNNTTKHLKVALIESSKIQTVEQSISNAIPEIRTISFNNQTIELFKSINVWDTIKSTKRVNPFNQVRVWDTSGFEGIHFQDNDIIDDGNNTTAMGYIIENNIVTSSLLSKVKQFENIELFEQLSVKSMNDYNEETIRTTSILPSVTLSNDQQLHAKLIIGADGGNSILKKQLQVPSIGRVYNQKAVVCTLKLGIKQDNNNNSSNNNNNNNNTLFQRFLPTGPIALLPLANGYANIIWSTNLMHAQYLLELDDESFLEQVKDSFLKSPSTSNSSFFEIASNLFNLNPKGLSGNEIYLPPIEGLVSKRASFPLRIDHTFNYTLPRVCFIGDASHLVHPMAGQGVNLGMADVKTLSSIIEQSVQSGYDIGDAMMLKRFEEIRKPENLKMLLSIDTLFNLFTNNSIFVTGLRNFGMSLLNNISPLKNLIIGVSKGESILKFK.

It belongs to the UbiH/COQ6 family. Component of a multi-subunit COQ enzyme complex. The cofactor is FAD.

The protein resides in the mitochondrion inner membrane. The catalysed reaction is a 4-hydroxy-3-(all-trans-polyprenyl)benzoate + 2 reduced [2Fe-2S]-[ferredoxin] + O2 + 2 H(+) = a 3,4-dihydroxy-5-(all-trans-polyprenyl)benzoate + 2 oxidized [2Fe-2S]-[ferredoxin] + H2O. It carries out the reaction a 2-methoxy-6-(all-trans-polyprenyl)phenol + 2 reduced [2Fe-2S]-[ferredoxin] + O2 + 2 H(+) = a 2-methoxy-6-(all-trans-polyprenyl)benzene-1,4-diol + 2 oxidized [2Fe-2S]-[ferredoxin] + H2O. It functions in the pathway cofactor biosynthesis; ubiquinone biosynthesis. In terms of biological role, FAD-dependent monooxygenase required for two non-consecutive steps during ubiquinone biosynthesis. Required for the C5-ring hydroxylation during ubiquinone biosynthesis by catalyzing the hydroxylation of 4-hydroxy-3-(all-trans-polyprenyl)benzoic acid to 3,4-dihydroxy-5-(all-trans-polyprenyl)benzoic acid. Also acts downstream of coq4, for the C1-hydroxylation during ubiquinone biosynthesis by catalyzing the hydroxylation of 2-methoxy-6-(all-trans-polyprenyl)phenol to 2-methoxy-6-(all-trans-polyprenyl)benzene-1,4-diol. The electrons required for the hydroxylation reaction are funneled indirectly to coq6 from NADPH via a ferredoxin/ferredoxin reductase system. This chain is Ubiquinone biosynthesis monooxygenase COQ6, mitochondrial, found in Dictyostelium discoideum (Social amoeba).